We begin with the raw amino-acid sequence, 974 residues long: Serine/threonine-protein kinase 10 (974 aa).

Residues 37-295 (WEIIGELGDG…AAQLLEHPFV (259 aa)) enclose the Protein kinase domain. Residues 43 to 51 (LGDGAFGKV) and Lys-66 each bind ATP. The Proton acceptor role is filled by Asp-158. Acidic residues predominate over residues 320–332 (EDNHEDGEDEDPA). Residues 320–479 (EDNHEDGEDE…EKEDHCEETQ (160 aa)) form a disordered region. Positions 343 to 353 (DPSQTSATSLN) are enriched in polar residues. Basic and acidic residues-rich tracts occupy residues 382-406 (PLKEQEDNLSDKFQVEDHDKPESEA) and 458-477 (TMEKYLEKPKEPEKEDHCEE). 2 coiled-coil regions span residues 605-729 (QKEQ…EEQK) and 870-950 (EKVK…EHLK).

This sequence belongs to the protein kinase superfamily. STE Ser/Thr protein kinase family. STE20 subfamily. Homodimer. In terms of processing, autophosphorylates.

It localises to the cell membrane. The catalysed reaction is L-seryl-[protein] + ATP = O-phospho-L-seryl-[protein] + ADP + H(+). It catalyses the reaction L-threonyl-[protein] + ATP = O-phospho-L-threonyl-[protein] + ADP + H(+). Its function is as follows. May act as a polo kinase kinase by mediating phosphorylation of plk1. This Danio rerio (Zebrafish) protein is Serine/threonine-protein kinase 10 (stk10).